Consider the following 238-residue polypeptide: Isoprene-epoxide--glutathione S-transferase (238 aa).

The region spanning 7 to 82 is the GST N-terminal domain; the sequence is YVPAWGIPDI…YLKNKFGDKL (76 aa). The GST C-terminal domain occupies 118–238; the sequence is DAGWETYIPF…LERIRKQYDI (121 aa).

It belongs to the GST superfamily. Homodimer.

It carries out the reaction 2-glutathionyl-2-methylbut-3-en-1-ol = (3R)-3,4-epoxy-3-methylbut-1-ene + glutathione. With respect to regulation, activity is inhibited by 1,2-epoxyhexane. Its function is as follows. Involved in isoprene degradation. Catalyzes the glutathione-dependent ring opening of various epoxides. The highest conversion rate is observed with the physiological substrate, 3,4-epoxy-3-methyl-1-butene, which is the primary oxidation product of isoprene. It can also use other epoxides, including epoxyethane, epoxypropane, epithiopropane, epichlorohydrin, epifluorohydrin, epibromohydrin, 1,2-epoxybutane, 1,2-epoxyhexane, cis-2,3-epoxybutane, cis-1,2-dichloroepoxyethane and trans-1,2-dichloroepoxyethane. This is Isoprene-epoxide--glutathione S-transferase from Rhodococcus sp. (strain AD45).